The sequence spans 37 residues: Large ribosomal subunit protein bL36 (37 aa).

The protein belongs to the bacterial ribosomal protein bL36 family.

This is Large ribosomal subunit protein bL36 from Desulfitobacterium hafniense (strain Y51).